Reading from the N-terminus, the 508-residue chain is Cobyric acid synthase (508 aa).

Residues 249–451 form the GATase cobBQ-type domain; it reads EVDVAIINLP…IHGIFENSLF (203 aa). C330 serves as the catalytic Nucleophile. The active site involves H443.

It belongs to the CobB/CobQ family. CobQ subfamily.

Its pathway is cofactor biosynthesis; adenosylcobalamin biosynthesis. Catalyzes amidations at positions B, D, E, and G on adenosylcobyrinic A,C-diamide. NH(2) groups are provided by glutamine, and one molecule of ATP is hydrogenolyzed for each amidation. This is Cobyric acid synthase from Caldanaerobacter subterraneus subsp. tengcongensis (strain DSM 15242 / JCM 11007 / NBRC 100824 / MB4) (Thermoanaerobacter tengcongensis).